A 51-amino-acid chain; its full sequence is Large ribosomal subunit protein eL39 (51 aa).

It belongs to the eukaryotic ribosomal protein eL39 family. As to quaternary structure, component of the large ribosomal subunit. Interacts with IMPACT.

It localises to the cytoplasm. RNA-binding component of the large ribosomal subunit. The ribosome is a large ribonucleoprotein complex responsible for the synthesis of proteins in the cell. In Mus musculus (Mouse), this protein is Large ribosomal subunit protein eL39 (Rpl39).